The chain runs to 422 residues: Putative serpin-Z8 (422 aa).

Residues 369 to 393 (GTVAAAATMTRMLPSGVPPPPVDFV) form an RCL region.

This sequence belongs to the serpin family.

In terms of biological role, probable serine protease inhibitor. The sequence is that of Putative serpin-Z8 from Oryza sativa subsp. japonica (Rice).